The following is a 242-amino-acid chain: ATP synthase subunit a (242 aa).

Helical transmembrane passes span 29-49, 84-104, 114-134, 140-160, 181-201, and 203-223; these read SSIY…LAFY, FIPL…LGMT, IIVT…VGFV, FLTL…MIVI, MAGH…MIYL, and FLPI…AILQ.

The protein belongs to the ATPase A chain family. As to quaternary structure, F-type ATPases have 2 components, CF(1) - the catalytic core - and CF(0) - the membrane proton channel. CF(1) has five subunits: alpha(3), beta(3), gamma(1), delta(1), epsilon(1). CF(0) has three main subunits: a(1), b(2) and c(9-12). The alpha and beta chains form an alternating ring which encloses part of the gamma chain. CF(1) is attached to CF(0) by a central stalk formed by the gamma and epsilon chains, while a peripheral stalk is formed by the delta and b chains.

The protein resides in the cell inner membrane. Its function is as follows. Key component of the proton channel; it plays a direct role in the translocation of protons across the membrane. In Rickettsia rickettsii (strain Sheila Smith), this protein is ATP synthase subunit a.